The sequence spans 1038 residues: MNNGKVRIYELSKELNLDNKELLAICDQLNIAVKSHSSTISESEAESIRAAAEKLAATNGTSKKELNTTSHKPNSAPAGSRNRPAPPQKQQQILEIRKPKILRNTTSNAPEASVANNQIASSEANSPAPPRPFATPVSPMKPTAPSRPVPRNLSETPQKPAAPEAEPEAQSQAPAKIAVEKPEKSAQPRPGKPERQPKPQLVAPPSRPTAEKLDLSEITGAPGEKPILKRDRPRREDERDQAKPRVAKPAQGETSSAPVQKQARPAQGPVKPEQRVNRPGAPSGDGIRPQRPVRPSVDAAPVATPPRGVPGGRGEVGDTAAIAPDLLDLKRPTPPRLAKGGKKWQEEEIIDEIKEKAGKAGVKGKRVKPLVEDDFEDEDLLDEEGLEIPATVQVSLSIARPPKPKAARAATAATAAPISSPTTRGKRSSHNNRDQNRRQETEVKRERPEKVAVTGPMTVQELADLLAVADTEIVKILFMKGMAVSITQNLDIPTITLVGKELEIEVETAEPEAEARKVTEMIEVGDLEHLLRRPPVVTIMGHVDHGKTTLLDSIRKTKVAAGEAGGITQHIGAYHVDIVHDGKEQQIVFLDTPGHEAFTAMRARGARVTDIAVLVVAADDGVRPQTVEAISHAQAAGVPIVVAINKIDKEGAQPDRVKQELTQYGLTPEEWGGETIMVPVSAIKGENLDTLLEMILLVAEVGELSANPDRNARGTVIEAHLDKAKGAVATLLIQNGTLHVGDILLAGSAFGKVRAMVDDRGRRVDIAGPSFAVEVLGLSDVPAAGDEFEVFDNEKEARALASDRADKQRLSRLLQGRVTLTTLSAQAQEGELKELNLILKGDVQGSVEAIVGSLKQIPQNEVQIRMLLTAAGEITETDIDLAAASGAVIIGFNTTFASGARQAADEAGVDVREYNIIYKLIEDIQGALEGLLEPELVEEPLGQTEVRAVFPVGRGAVAGCYVQSGKLVRNCKVRVRRAGKVIYEGVLDSLKRMKDDAREVNAGYECGIGVDKFHDWAEGDIIESYQMVTKRRTLALTR.

Disordered stretches follow at residues 39–346 (TISE…KWQE) and 403–451 (KPKA…PEKV). The span at 103 to 125 (RNTTSNAPEASVANNQIASSEAN) shows a compositional bias: polar residues. Residues 157 to 176 (PQKPAAPEAEPEAQSQAPAK) are compositionally biased toward low complexity. Basic and acidic residues-rich tracts occupy residues 178–197 (AVEKPEKSAQPRPGKPERQP) and 226–243 (PILKRDRPRREDERDQAK). The segment covering 407 to 423 (ARAATAATAAPISSPTT) has biased composition (low complexity). The span at 431–450 (NNRDQNRRQETEVKRERPEK) shows a compositional bias: basic and acidic residues. The region spanning 532–705 (RRPPVVTIMG…LLVAEVGELS (174 aa)) is the tr-type G domain. Positions 541-548 (GHVDHGKT) are G1. 541-548 (GHVDHGKT) contributes to the GTP binding site. The interval 566–570 (GITQH) is G2. The tract at residues 591–594 (DTPG) is G3. GTP contacts are provided by residues 591-595 (DTPGH) and 645-648 (NKID). Residues 645 to 648 (NKID) form a G4 region. The interval 681–683 (SAI) is G5.

This sequence belongs to the TRAFAC class translation factor GTPase superfamily. Classic translation factor GTPase family. IF-2 subfamily.

The protein localises to the cytoplasm. Functionally, one of the essential components for the initiation of protein synthesis. Protects formylmethionyl-tRNA from spontaneous hydrolysis and promotes its binding to the 30S ribosomal subunits. Also involved in the hydrolysis of GTP during the formation of the 70S ribosomal complex. This is Translation initiation factor IF-2 from Trichormus variabilis (strain ATCC 29413 / PCC 7937) (Anabaena variabilis).